A 491-amino-acid polypeptide reads, in one-letter code: Equilibrative nucleobase transporter 1 (491 aa).

A helical transmembrane segment spans residues L17–F37. An N-linked (GlcNAc...) asparagine glycan is attached at N56. Helical transmembrane passes span L72–F92, L102–S122, A123–T143, S156–I176, and A188–M208. N-linked (GlcNAc...) asparagine glycosylation is found at N220 and N229. The residue at position 253 (S253) is a Phosphoserine. Position 258 is a phosphothreonine (T258). The next 6 membrane-spanning stretches (helical) occupy residues F279 to T299, T319 to M339, S356 to C376, I396 to P418, G427 to I447, and F456 to V476.

The protein belongs to the SLC43A transporter (TC 2.A.1.44) family. As to expression, widely expressed with highest levels in the liver and lung, followed by the pancreas. Highly expressed in macrophages.

The protein localises to the basolateral cell membrane. The catalysed reaction is adenine(out) = adenine(in). The enzyme catalyses guanine(out) = guanine(in). It carries out the reaction hypoxanthine(out) = hypoxanthine(in). Its activity is regulated as follows. Adenine transport is strongly inhibited by decynium-22. With respect to regulation, 6-mercaptopurine-transport is inhibited by 6-thioguanine, 6-methylmercaptopurine and decynium-22. In terms of biological role, sodium-independent purine-selective nucleobase transporter which mediates the equilibrative transport of extracellular purine nucleobases such as adenine, guanine and hypoxanthine. May regulate fatty acid (FA) transport in adipocytes, acting as a positive regulator of FA efflux and as a negative regulator of FA uptake. Functionally, sodium-independent purine-selective nucleobase transporter which mediates the equilibrative transport of extracellular purine nucleobase adenine. Mediates the influx and efflux of the purine nucleobase analog drug 6-mercaptopurine across the membrane. This Homo sapiens (Human) protein is Equilibrative nucleobase transporter 1 (SLC43A3).